Consider the following 155-residue polypeptide: Ribosomal RNA large subunit methyltransferase H (155 aa).

S-adenosyl-L-methionine-binding positions include Leu72, Gly103, and 122-127 (LSPLTL).

The protein belongs to the RNA methyltransferase RlmH family. Homodimer.

The protein localises to the cytoplasm. The catalysed reaction is pseudouridine(1915) in 23S rRNA + S-adenosyl-L-methionine = N(3)-methylpseudouridine(1915) in 23S rRNA + S-adenosyl-L-homocysteine + H(+). Its function is as follows. Specifically methylates the pseudouridine at position 1915 (m3Psi1915) in 23S rRNA. The protein is Ribosomal RNA large subunit methyltransferase H of Histophilus somni (strain 2336) (Haemophilus somnus).